Here is a 364-residue protein sequence, read N- to C-terminus: Coproporphyrin III ferrochelatase (364 aa).

Fe-coproporphyrin III is bound by residues Arg29 and Tyr118. Residues His169 and Glu250 each contribute to the Fe(2+) site.

It belongs to the ferrochelatase family.

Its subcellular location is the cytoplasm. The catalysed reaction is Fe-coproporphyrin III + 2 H(+) = coproporphyrin III + Fe(2+). Its pathway is porphyrin-containing compound metabolism; protoheme biosynthesis. Its function is as follows. Involved in coproporphyrin-dependent heme b biosynthesis. Catalyzes the insertion of ferrous iron into coproporphyrin III to form Fe-coproporphyrin III. The sequence is that of Coproporphyrin III ferrochelatase from Streptococcus pneumoniae serotype 4 (strain ATCC BAA-334 / TIGR4).